A 380-amino-acid chain; its full sequence is Probable acyl-CoA dehydrogenase YngJ (380 aa).

Residues 123-132, 156-158, Arg-269, and 337-341 each bind FAD; these read FGLTEPNAGS, WIT, and QIHGG. Glu-364 (proton acceptor) is an active-site residue. 366–368 is a binding site for FAD; that stretch reads TSE.

The protein belongs to the acyl-CoA dehydrogenase family. FAD serves as cofactor.

It catalyses the reaction a 2,3-saturated acyl-CoA + A = a 2,3-dehydroacyl-CoA + AH2. In Bacillus subtilis (strain 168), this protein is Probable acyl-CoA dehydrogenase YngJ (yngJ).